The primary structure comprises 244 residues: Methylthioribulose-1-phosphate dehydratase (244 aa).

Cys-89 provides a ligand contact to substrate. Positions 107 and 109 each coordinate Zn(2+). Glu-130 functions as the Proton donor/acceptor in the catalytic mechanism. Residue His-192 coordinates Zn(2+).

This sequence belongs to the aldolase class II family. MtnB subfamily. It depends on Zn(2+) as a cofactor.

The protein resides in the cytoplasm. It catalyses the reaction 5-(methylsulfanyl)-D-ribulose 1-phosphate = 5-methylsulfanyl-2,3-dioxopentyl phosphate + H2O. It functions in the pathway amino-acid biosynthesis; L-methionine biosynthesis via salvage pathway; L-methionine from S-methyl-5-thio-alpha-D-ribose 1-phosphate: step 2/6. In terms of biological role, catalyzes the dehydration of methylthioribulose-1-phosphate (MTRu-1-P) into 2,3-diketo-5-methylthiopentyl-1-phosphate (DK-MTP-1-P). This is Methylthioribulose-1-phosphate dehydratase from Saccharomyces cerevisiae (strain ATCC 204508 / S288c) (Baker's yeast).